We begin with the raw amino-acid sequence, 68 residues long: Protein transport protein Sec61 subunit gamma (68 aa).

Met1 is subject to N-acetylmethionine. The Cytoplasmic segment spans residues Met1–Glu32. Ser18 carries the post-translational modification Phosphoserine. A helical membrane pass occupies residues Phe33–Ile61. Residues Asn62–Gly68 lie on the Extracellular side of the membrane.

Belongs to the SecE/SEC61-gamma family. As to quaternary structure, the SEC61 channel-forming translocon complex consists of channel-forming core components SEC61A1, SEC61B and SEC61G and different auxiliary components such as SEC62 and SEC63. The SEC61 channel associates with the multi-pass translocon (MPT) complex.

It localises to the endoplasmic reticulum membrane. Its function is as follows. Component of SEC61 channel-forming translocon complex that mediates transport of signal peptide-containing precursor polypeptides across the endoplasmic reticulum (ER). Forms a ribosome receptor and a gated pore in the ER membrane, both functions required for cotranslational translocation of nascent polypeptides. The SEC61 channel is also involved in ER membrane insertion of transmembrane proteins: it mediates membrane insertion of the first few transmembrane segments of proteins, while insertion of subsequent transmembrane regions of multi-pass membrane proteins is mediated by the multi-pass translocon (MPT) complex. The SEC61 channel cooperates with the translocating protein TRAM1 to import nascent proteins into the ER. In Bos taurus (Bovine), this protein is Protein transport protein Sec61 subunit gamma (SEC61G).